Here is a 535-residue protein sequence, read N- to C-terminus: Ribonuclease Y (535 aa).

A helical transmembrane segment spans residues 4-24 (IILLIVSALIGLILGYALISI). The tract at residues 118 to 141 (ENLSSKEKVLDSKEQSLTDKSKHI) is disordered. The KH domain occupies 225 to 285 (TITSVHLPDD…IRREIARMTL (61 aa)). The region spanning 351–444 (VLRHSVEVGK…VAAADALSSA (94 aa)) is the HD domain.

It belongs to the RNase Y family.

It localises to the cell membrane. Endoribonuclease that initiates mRNA decay. This Streptococcus pyogenes serotype M18 (strain MGAS8232) protein is Ribonuclease Y.